The sequence spans 500 residues: L-arabinose isomerase (500 aa).

Mn(2+)-binding residues include Glu-306, Glu-333, His-350, and His-450.

Belongs to the arabinose isomerase family. As to quaternary structure, homohexamer. Mn(2+) is required as a cofactor.

It carries out the reaction beta-L-arabinopyranose = L-ribulose. The protein operates within carbohydrate degradation; L-arabinose degradation via L-ribulose; D-xylulose 5-phosphate from L-arabinose (bacterial route): step 1/3. Functionally, catalyzes the conversion of L-arabinose to L-ribulose. In Shigella flexneri, this protein is L-arabinose isomerase.